Consider the following 395-residue polypeptide: Succinate--CoA ligase [ADP-forming] subunit beta (395 aa).

The ATP-grasp domain maps to 9 to 240 (RDVFEKHGVP…AASADPLEAK (232 aa)). ATP is bound by residues lysine 49, 56–58 (GRG), alanine 98, and glutamate 103. Mg(2+) is bound by residues asparagine 195 and aspartate 209. Substrate-binding positions include asparagine 260 and 322-324 (GIT).

Belongs to the succinate/malate CoA ligase beta subunit family. In terms of assembly, heterotetramer of two alpha and two beta subunits. Mg(2+) is required as a cofactor.

The catalysed reaction is succinate + ATP + CoA = succinyl-CoA + ADP + phosphate. It catalyses the reaction GTP + succinate + CoA = succinyl-CoA + GDP + phosphate. The protein operates within carbohydrate metabolism; tricarboxylic acid cycle; succinate from succinyl-CoA (ligase route): step 1/1. Functionally, succinyl-CoA synthetase functions in the citric acid cycle (TCA), coupling the hydrolysis of succinyl-CoA to the synthesis of either ATP or GTP and thus represents the only step of substrate-level phosphorylation in the TCA. The beta subunit provides nucleotide specificity of the enzyme and binds the substrate succinate, while the binding sites for coenzyme A and phosphate are found in the alpha subunit. The polypeptide is Succinate--CoA ligase [ADP-forming] subunit beta (Beutenbergia cavernae (strain ATCC BAA-8 / DSM 12333 / CCUG 43141 / JCM 11478 / NBRC 16432 / NCIMB 13614 / HKI 0122)).